Reading from the N-terminus, the 98-residue chain is Alpha-elicitin capsicein (98 aa).

Intrachain disulfides connect cysteine 3–cysteine 71, cysteine 27–cysteine 56, and cysteine 51–cysteine 95.

This sequence belongs to the elicitin family.

The protein localises to the secreted. Its function is as follows. Induces local and distal defense responses (incompatible hypersensitive reaction) in plants from the solanaceae and cruciferae families. Elicits leaf necrosis and causes the accumulation of pathogenesis-related proteins. Might interact with the lipidic molecules of the plasma membrane. The sequence is that of Alpha-elicitin capsicein from Phytophthora capsici.